A 196-amino-acid polypeptide reads, in one-letter code: uncharacterized protein (196 aa).

The HTH cro/C1-type domain occupies 12-66; that stretch reads LRAAREAQKMSQRELSARSGLTQSHISQIERGTMEPGLGSLVDVARALDLEIVLA. The segment at residues 23–42 is a DNA-binding region (H-T-H motif); the sequence is QRELSARSGLTQSHISQIER. The segment at 174–196 is disordered; that stretch reads VHRDRDDAVPRSAYALDEEDDNA.

This is an uncharacterized protein from Sinorhizobium fredii (strain NBRC 101917 / NGR234).